A 73-amino-acid chain; its full sequence is Large ribosomal subunit protein bL31 (73 aa).

The Zn(2+) site is built by Cys-16, Cys-18, Cys-37, and Cys-40.

It belongs to the bacterial ribosomal protein bL31 family. Type A subfamily. In terms of assembly, part of the 50S ribosomal subunit. Zn(2+) serves as cofactor.

Binds the 23S rRNA. This is Large ribosomal subunit protein bL31 from Marinobacter nauticus (strain ATCC 700491 / DSM 11845 / VT8) (Marinobacter aquaeolei).